The chain runs to 334 residues: MYELKTLLPQFDIKLPTCMYPLKNVSLAADSLASGSSTSASTSASTSSCKLEANRIDRTGRNAATCALDLDSLGRQIQRLLKDDTASVAARQEKVLKQLEELKAQLGQIRAGLGVCGKTFQHTTAFQNGGLKEVPLQDVVINGHPNFIPYALLALKNAWRNLYTIDVKTFTHSTMADIGPAAREFEANLAKVPVNPALPKISVTLIWKNCEHTEMISSPTMYVPIYGEVNIIRYLGRVGPAEYRYEGSPLCNEIDLVLDICYQLLRCNTHKTQVAMVRLLDKRLQKQQYFGGSQMSVADVGVYSSLIRMPAVTEKDLTPALVAWRKRAKLVVQI.

The GST C-terminal domain maps to 280 to 327 (LDKRLQKQQYFGGSQMSVADVGVYSSLIRMPAVTEKDLTPALVAWRKR).

As to quaternary structure, component of the aminoacyl-tRNA synthase complex which is comprised of a bifunctional glutamyl-prolyl-tRNA synthase, the monospecific isoleucyl, leucyl, glutaminyl, methionyl, lysyl, arginyl and aspartyl-tRNA synthases, and three auxiliary proteins.

The protein localises to the cytoplasm. Its subcellular location is the cytosol. The protein resides in the nucleus. Required for assembly and stability of the aminoacyl-tRNA synthase complex. The protein is Probable aminoacyl tRNA synthase complex-interacting multifunctional protein 2 of Drosophila melanogaster (Fruit fly).